A 214-amino-acid chain; its full sequence is Pyridoxine/pyridoxamine 5'-phosphate oxidase (214 aa).

Residues 8 to 11 and R66 contribute to the substrate site; that span reads RLSY. Residues 61–66, 76–77, K83, and Q105 contribute to the FMN site; these read RTVLLR and FT. The substrate site is built by Y123, R127, and S131. The segment at 126–146 is disordered; the sequence is SRPRESQLAAHASDPQSAPVS. FMN is bound by residues 141-142 and W187; that span reads QS. 193–195 lines the substrate pocket; that stretch reads RMH. R197 lines the FMN pocket.

This sequence belongs to the pyridoxamine 5'-phosphate oxidase family. As to quaternary structure, homodimer. The cofactor is FMN.

It catalyses the reaction pyridoxamine 5'-phosphate + O2 + H2O = pyridoxal 5'-phosphate + H2O2 + NH4(+). The enzyme catalyses pyridoxine 5'-phosphate + O2 = pyridoxal 5'-phosphate + H2O2. The protein operates within cofactor metabolism; pyridoxal 5'-phosphate salvage; pyridoxal 5'-phosphate from pyridoxamine 5'-phosphate: step 1/1. It functions in the pathway cofactor metabolism; pyridoxal 5'-phosphate salvage; pyridoxal 5'-phosphate from pyridoxine 5'-phosphate: step 1/1. Catalyzes the oxidation of either pyridoxine 5'-phosphate (PNP) or pyridoxamine 5'-phosphate (PMP) into pyridoxal 5'-phosphate (PLP). The protein is Pyridoxine/pyridoxamine 5'-phosphate oxidase of Deinococcus deserti (strain DSM 17065 / CIP 109153 / LMG 22923 / VCD115).